A 156-amino-acid polypeptide reads, in one-letter code: Small ribosomal subunit protein uS7 (156 aa).

Belongs to the universal ribosomal protein uS7 family. In terms of assembly, part of the 30S ribosomal subunit. Contacts proteins S9 and S11.

Functionally, one of the primary rRNA binding proteins, it binds directly to 16S rRNA where it nucleates assembly of the head domain of the 30S subunit. Is located at the subunit interface close to the decoding center, probably blocks exit of the E-site tRNA. The sequence is that of Small ribosomal subunit protein uS7 from Brevibacillus brevis (strain 47 / JCM 6285 / NBRC 100599).